Reading from the N-terminus, the 454-residue chain is tRNA-2-methylthio-N(6)-dimethylallyladenosine synthase (454 aa).

One can recognise an MTTase N-terminal domain in the interval 11–128; that stretch reads KKLYIQTHGC…LPEMIETPRE (118 aa). Residues C20, C57, C91, C165, C169, and C172 each coordinate [4Fe-4S] cluster. The region spanning 151 to 382 is the Radical SAM core domain; it reads EADGATAFVS…QTRIIQQAQE (232 aa). Residues 385–449 form the TRAM domain; that stretch reads RRMVGNTERV…PNSLRGVLLG (65 aa).

This sequence belongs to the methylthiotransferase family. MiaB subfamily. In terms of assembly, monomer. [4Fe-4S] cluster serves as cofactor.

It localises to the cytoplasm. The enzyme catalyses N(6)-dimethylallyladenosine(37) in tRNA + (sulfur carrier)-SH + AH2 + 2 S-adenosyl-L-methionine = 2-methylsulfanyl-N(6)-dimethylallyladenosine(37) in tRNA + (sulfur carrier)-H + 5'-deoxyadenosine + L-methionine + A + S-adenosyl-L-homocysteine + 2 H(+). Catalyzes the methylthiolation of N6-(dimethylallyl)adenosine (i(6)A), leading to the formation of 2-methylthio-N6-(dimethylallyl)adenosine (ms(2)i(6)A) at position 37 in tRNAs that read codons beginning with uridine. This chain is tRNA-2-methylthio-N(6)-dimethylallyladenosine synthase, found in Saccharophagus degradans (strain 2-40 / ATCC 43961 / DSM 17024).